The following is a 395-amino-acid chain: N5-carboxyaminoimidazole ribonucleotide synthase (395 aa).

ATP contacts are provided by residues K109, K149, 184-187, E192, and 268-269; these read EEFI and NE. An ATP-grasp domain is found at 113–298; that stretch reads RQLLTRLGLP…QFEQQLRAIA (186 aa).

It belongs to the PurK/PurT family. In terms of assembly, homodimer.

The catalysed reaction is 5-amino-1-(5-phospho-beta-D-ribosyl)imidazole + hydrogencarbonate + ATP = 5-carboxyamino-1-(5-phospho-D-ribosyl)imidazole + ADP + phosphate + 2 H(+). The protein operates within purine metabolism; IMP biosynthesis via de novo pathway; 5-amino-1-(5-phospho-D-ribosyl)imidazole-4-carboxylate from 5-amino-1-(5-phospho-D-ribosyl)imidazole (N5-CAIR route): step 1/2. Catalyzes the ATP-dependent conversion of 5-aminoimidazole ribonucleotide (AIR) and HCO(3)(-) to N5-carboxyaminoimidazole ribonucleotide (N5-CAIR). The sequence is that of N5-carboxyaminoimidazole ribonucleotide synthase from Synechococcus elongatus (strain ATCC 33912 / PCC 7942 / FACHB-805) (Anacystis nidulans R2).